A 515-amino-acid chain; its full sequence is Tabersonine 6,7-epoxidase isoform 2 (515 aa).

A helical membrane pass occupies residues 1–21 (MEFVVSPFAFLIFFFILLKMI). N-linked (GlcNAc...) asparagine glycans are attached at residues Asn-173, Asn-259, and Asn-352. Position 449 (Cys-449) interacts with heme.

The protein belongs to the cytochrome P450 family. It depends on heme as a cofactor. As to expression, mainly expressed in aerial organs, including stems, leaves and flowers.

Its subcellular location is the endoplasmic reticulum membrane. It carries out the reaction (-)-tabersonine + reduced [NADPH--hemoprotein reductase] + O2 = lochnericine + oxidized [NADPH--hemoprotein reductase] + H2O + H(+). It functions in the pathway alkaloid biosynthesis. Functionally, component of the monoterpenoid indole alkaloids (MIAs, e.g. echitovenine, tabersonine, lochnericine, 19-hydroxytabersonine and horhammericine) biosynthetic pathway; MIAs are used in cancer treatment and other medical applications. Cytochrome P450 catalyzing the conversion of tabersonine to lochnericine. This Catharanthus roseus (Madagascar periwinkle) protein is Tabersonine 6,7-epoxidase isoform 2.